Consider the following 452-residue polypeptide: uncharacterized protein (452 aa).

Residue 72–79 (GPPGSGKT) participates in ATP binding.

Belongs to the AAA ATPase family. RarA/MGS1/WRNIP1 subfamily.

This is an uncharacterized protein from Mycobacterium tuberculosis (strain ATCC 25618 / H37Rv).